The sequence spans 660 residues: Polycomb protein SCMH1 (660 aa).

MBT repeat units lie at residues 28–126 (FTWD…LQPP) and 134–235 (SSWP…LQPP). The tract at residues 233–345 (QPPGTKVVIP…EPDTSTVPQD (113 aa)) is disordered. Composition is skewed to basic residues over residues 273–284 (RGRKPGKKRGRT) and 305–320 (FPKKRGPKPGSKRKPR). Over residues 330 to 343 (PTTSTPEPDTSTVP) the composition is skewed to low complexity. The SAM domain maps to 593–658 (WTVEDVMQFV…SYHIDRLKQG (66 aa)).

It belongs to the SCM family. As to quaternary structure, interacts with the SAM domain of PHC1 via its SAM domain in vitro. Associates with a PRC1-like complex. As to expression, strongly expressed in heart, muscle and pancreas. Weakly expressed in brain, placenta, lung, liver and kidney.

The protein localises to the nucleus. In terms of biological role, associates with Polycomb group (PcG) multiprotein complexes; the complex class is required to maintain the transcriptionally repressive state of some genes. The chain is Polycomb protein SCMH1 from Homo sapiens (Human).